A 242-amino-acid chain; its full sequence is MTEVVPSSALSEVSLRLLCHDDIDTVKHLCGDWFPIEYPDSWYRDITSNKKFFSLAATYRGAIVGMIVAEIKNRTKIHKEDGDILASNFSVDTQVAYILSLGVVKEFRKHGIGSLLLESLKDHISTTAQDHCKAIYLHVLTTNNTAINFYENRDFKQHHYLPYYYSIRGVLKDGFTYVLYINGGHPPWTILDYIQHLGSALASLSPCSIPHRVYRQAHSLLCSFLPWSGISSKSGIEYSRTM.

Topologically, residues 1 to 192 are cytoplasmic; it reads MTEVVPSSAL…GGHPPWTILD (192 aa). The N-acetyltransferase domain occupies 13–182; it reads VSLRLLCHDD…DGFTYVLYIN (170 aa). Tyr-38 contributes to the substrate binding site. N6-acetyllysine; by autocatalysis is present on Lys-79. Tyr-97 is a catalytic residue. Leu-99 lines the substrate pocket. Residue 101-103 coordinates acetyl-CoA; it reads LGV. N6-acetyllysine; by autocatalysis occurs at positions 105, 109, and 121. 109-114 contributes to the acetyl-CoA binding site; it reads KHGIGS. His-138 is an active-site residue. Acetyl-CoA is bound by residues Asn-143 and 150 to 153; that span reads YENR. Lys-156 carries the N6-acetyllysine; by autocatalysis modification. Residues 162–173 form a required for homodimerization region; it reads PYYYSIRGVLKD. Tyr-165 contributes to the substrate binding site. Positions 193–236 form an intramembrane region, helical; sequence YIQHLGSALASLSPCSIPHRVYRQAHSLLCSFLPWSGISSKSGI. Topologically, residues 237–242 are cytoplasmic; that stretch reads EYSRTM.

The protein belongs to the acetyltransferase family. NAA60 subfamily. In terms of assembly, monomer and homodimer; monomer in presence of substrate and homodimer in its absence. In terms of processing, acetylated: autoacetylation is required for optimal acetyltransferase activity.

Its subcellular location is the golgi apparatus membrane. The enzyme catalyses N-terminal L-methionyl-[transmembrane protein] + acetyl-CoA = N-terminal N(alpha)-acetyl-L-methionyl-[transmembrane protein] + CoA + H(+). It carries out the reaction L-lysyl-[protein] + acetyl-CoA = N(6)-acetyl-L-lysyl-[protein] + CoA + H(+). In terms of biological role, N-alpha-acetyltransferase that specifically mediates the acetylation of N-terminal residues of the transmembrane proteins, with a strong preference for N-termini facing the cytosol. Displays N-terminal acetyltransferase activity towards a range of N-terminal sequences including those starting with Met-Lys, Met-Val, Met-Ala and Met-Met. Required for normal chromosomal segregation during anaphase. May also show histone acetyltransferase activity; such results are however unclear in vivo and would require additional experimental evidences. The sequence is that of N-alpha-acetyltransferase 60 from Homo sapiens (Human).